A 160-amino-acid polypeptide reads, in one-letter code: Large ribosomal subunit protein uL15 (160 aa).

Residues 1–14 (MKLNDISDNPGSSK) are compositionally biased toward polar residues. Positions 1–35 (MKLNDISDNPGSSKSRMRVGRGIGSGKGKTCGRGV) are disordered. A compositionally biased stretch (gly residues) spans 21-35 (RGIGSGKGKTCGRGV).

It belongs to the universal ribosomal protein uL15 family. In terms of assembly, part of the 50S ribosomal subunit.

Functionally, binds to the 23S rRNA. The sequence is that of Large ribosomal subunit protein uL15 from Beijerinckia indica subsp. indica (strain ATCC 9039 / DSM 1715 / NCIMB 8712).